A 106-amino-acid chain; its full sequence is UPF0145 protein Csac_0771 (106 aa).

This sequence belongs to the UPF0145 family.

The polypeptide is UPF0145 protein Csac_0771 (Caldicellulosiruptor saccharolyticus (strain ATCC 43494 / DSM 8903 / Tp8T 6331)).